A 401-amino-acid chain; its full sequence is Imidazolonepropionase (401 aa).

Positions 66 and 68 each coordinate Fe(3+). Positions 66 and 68 each coordinate Zn(2+). The 4-imidazolone-5-propanoate site is built by Arg75, Tyr138, and His171. Residue Tyr138 coordinates N-formimidoyl-L-glutamate. Fe(3+) is bound at residue His236. His236 contacts Zn(2+). Position 239 (Gln239) interacts with 4-imidazolone-5-propanoate. Asp311 is a binding site for Fe(3+). Residue Asp311 coordinates Zn(2+). The N-formimidoyl-L-glutamate site is built by Asn313 and Gly315. Residue Thr316 participates in 4-imidazolone-5-propanoate binding.

The protein belongs to the metallo-dependent hydrolases superfamily. HutI family. Zn(2+) serves as cofactor. It depends on Fe(3+) as a cofactor.

The protein resides in the cytoplasm. It carries out the reaction 4-imidazolone-5-propanoate + H2O = N-formimidoyl-L-glutamate. It participates in amino-acid degradation; L-histidine degradation into L-glutamate; N-formimidoyl-L-glutamate from L-histidine: step 3/3. Functionally, catalyzes the hydrolytic cleavage of the carbon-nitrogen bond in imidazolone-5-propanoate to yield N-formimidoyl-L-glutamate. It is the third step in the universal histidine degradation pathway. The polypeptide is Imidazolonepropionase (Pseudomonas putida (strain ATCC 700007 / DSM 6899 / JCM 31910 / BCRC 17059 / LMG 24140 / F1)).